Consider the following 62-residue polypeptide: Large ribosomal subunit protein uL30 (62 aa).

The protein belongs to the universal ribosomal protein uL30 family. Part of the 50S ribosomal subunit.

This is Large ribosomal subunit protein uL30 from Pseudoalteromonas atlantica (strain T6c / ATCC BAA-1087).